The following is a 247-amino-acid chain: UDP-2,3-diacylglucosamine hydrolase (247 aa).

Mn(2+)-binding residues include aspartate 8, histidine 10, aspartate 41, asparagine 79, and histidine 114. Substrate is bound at residue 79 to 80 (NR). The substrate site is built by aspartate 122, serine 160, aspartate 171, glutamine 174, and histidine 202. 2 residues coordinate Mn(2+): histidine 202 and histidine 204.

Belongs to the LpxH family. It depends on Mn(2+) as a cofactor.

It localises to the cell inner membrane. It catalyses the reaction UDP-2-N,3-O-bis[(3R)-3-hydroxytetradecanoyl]-alpha-D-glucosamine + H2O = 2-N,3-O-bis[(3R)-3-hydroxytetradecanoyl]-alpha-D-glucosaminyl 1-phosphate + UMP + 2 H(+). The protein operates within glycolipid biosynthesis; lipid IV(A) biosynthesis; lipid IV(A) from (3R)-3-hydroxytetradecanoyl-[acyl-carrier-protein] and UDP-N-acetyl-alpha-D-glucosamine: step 4/6. In terms of biological role, hydrolyzes the pyrophosphate bond of UDP-2,3-diacylglucosamine to yield 2,3-diacylglucosamine 1-phosphate (lipid X) and UMP by catalyzing the attack of water at the alpha-P atom. Involved in the biosynthesis of lipid A, a phosphorylated glycolipid that anchors the lipopolysaccharide to the outer membrane of the cell. The sequence is that of UDP-2,3-diacylglucosamine hydrolase from Xanthomonas campestris pv. campestris (strain 8004).